Consider the following 619-residue polypeptide: Probable pectinesterase/pectinesterase inhibitor 25 (619 aa).

The signal sequence occupies residues 1 to 23 (MKMQTLNFTSSLLFLSFIFLSCA). Residues 31 to 84 (SPSQPHSEPPSQLPFEPPVESPFFPPSQPPIFVPPSQPPSLPPSQSQSPSLACK) form a disordered region. Over residues 37–72 (SEPPSQLPFEPPVESPFFPPSQPPIFVPPSQPPSLP) the composition is skewed to pro residues. The interval 73-231 (PSQSQSPSLA…TRLYSISLGL (159 aa)) is pectinesterase inhibitor 25. Asparagine 220, asparagine 255, asparagine 312, asparagine 325, and asparagine 364 each carry an N-linked (GlcNAc...) asparagine glycan. Residues 302 to 601 (AVIVGPFKSD…FTVYNFTMGD (300 aa)) are pectinesterase 25. Threonine 380 provides a ligand contact to substrate. An N-linked (GlcNAc...) asparagine glycan is attached at asparagine 382. Residue glutamine 410 participates in substrate binding. The Proton donor; for pectinesterase activity role is filled by aspartate 433. Cysteine 447 and cysteine 467 are joined by a disulfide. Aspartate 454 functions as the Nucleophile; for pectinesterase activity in the catalytic mechanism. Asparagine 500 carries an N-linked (GlcNAc...) asparagine glycan. Substrate-binding residues include arginine 522 and tryptophan 524. N-linked (GlcNAc...) asparagine glycans are attached at residues asparagine 550, asparagine 591, and asparagine 596.

This sequence in the N-terminal section; belongs to the PMEI family. The protein in the C-terminal section; belongs to the pectinesterase family. Expressed in siliques.

It localises to the secreted. The protein resides in the cell wall. It catalyses the reaction [(1-&gt;4)-alpha-D-galacturonosyl methyl ester](n) + n H2O = [(1-&gt;4)-alpha-D-galacturonosyl](n) + n methanol + n H(+). It functions in the pathway glycan metabolism; pectin degradation; 2-dehydro-3-deoxy-D-gluconate from pectin: step 1/5. In terms of biological role, acts in the modification of cell walls via demethylesterification of cell wall pectin. This is Probable pectinesterase/pectinesterase inhibitor 25 (PME25) from Arabidopsis thaliana (Mouse-ear cress).